Here is a 75-residue protein sequence, read N- to C-terminus: Large ribosomal subunit protein bL31 (75 aa).

Belongs to the bacterial ribosomal protein bL31 family. Type A subfamily. As to quaternary structure, part of the 50S ribosomal subunit.

In terms of biological role, binds the 23S rRNA. This Bradyrhizobium diazoefficiens (strain JCM 10833 / BCRC 13528 / IAM 13628 / NBRC 14792 / USDA 110) protein is Large ribosomal subunit protein bL31.